A 359-amino-acid polypeptide reads, in one-letter code: UDP-3-O-acylglucosamine N-acyltransferase (359 aa).

Catalysis depends on histidine 248, which acts as the Proton acceptor.

The protein belongs to the transferase hexapeptide repeat family. LpxD subfamily. Homotrimer.

The enzyme catalyses a UDP-3-O-[(3R)-3-hydroxyacyl]-alpha-D-glucosamine + a (3R)-hydroxyacyl-[ACP] = a UDP-2-N,3-O-bis[(3R)-3-hydroxyacyl]-alpha-D-glucosamine + holo-[ACP] + H(+). Its pathway is bacterial outer membrane biogenesis; LPS lipid A biosynthesis. Its function is as follows. Catalyzes the N-acylation of UDP-3-O-acylglucosamine using 3-hydroxyacyl-ACP as the acyl donor. Is involved in the biosynthesis of lipid A, a phosphorylated glycolipid that anchors the lipopolysaccharide to the outer membrane of the cell. The sequence is that of UDP-3-O-acylglucosamine N-acyltransferase from Chlamydia abortus (strain DSM 27085 / S26/3) (Chlamydophila abortus).